Consider the following 356-residue polypeptide: Probable L-asparaginase 4 (356 aa).

The N-terminal stretch at 1–22 (MWGFIVTCGIFLVLLCQLRLLS) is a signal peptide. Residues 36–356 (PNVTVFAMGG…RDIEGLFSIK (321 aa)) enclose the Asparaginase/glutaminase domain. Asn-37 carries N-linked (GlcNAc...) asparagine glycosylation. Residue Thr-46 is the O-isoaspartyl threonine intermediate of the active site. Asn-52 carries an N-linked (GlcNAc...) asparagine glycan. Residues Ser-93 and 126–127 (TD) contribute to the substrate site. Asn-176 carries an N-linked (GlcNAc...) asparagine glycan.

Belongs to the asparaginase 1 family.

The protein resides in the secreted. It is found in the cell wall. The enzyme catalyses L-asparagine + H2O = L-aspartate + NH4(+). The protein is Probable L-asparaginase 4 of Schizosaccharomyces pombe (strain 972 / ATCC 24843) (Fission yeast).